The following is a 495-amino-acid chain: YTH domain-containing protein ECT3 (495 aa).

Positions 261 to 398 (AKFYVIKSYS…EQGIKVIKIF (138 aa)) constitute a YTH domain. Residues 267-269 (KSY), Asp273, 283-284 (WS), Asn316, Trp340, Trp345, and Trp353 each bind RNA.

As to expression, expressed in the shoot apex, at the sites of leaf formation, and in emerging leaves.

The protein localises to the cytoplasm. In terms of biological role, specifically recognizes and binds N6-methyladenosine (m6A)-containing RNAs, and regulates mRNA stability. M6A is a modification present at internal sites of mRNAs and some non-coding RNAs and plays a role in mRNA stability and processing. Required for the correct timing of leaf formation and normal leaf morphology. Required for proper trichome branching and morphology. Functions redundantly with ECT2. The sequence is that of YTH domain-containing protein ECT3 from Arabidopsis thaliana (Mouse-ear cress).